The primary structure comprises 290 residues: MASITLTPSEKDIQAFLEHYQTSLAPSKNPYIRYFLKLPQATVSIYTSGKILLQGEGAEKYASFFGYQAVEQTSGQNLPLIGTDEVGNGSYFGGLAVVAAFVTPDQHDFLRKLGVGDSKTLTDQKIRQIAPILKEKIQHQALLLSPSKYNEVIGDRYNAVSVKVALHNQAIYLLLQKGVQPEKIVIDAFTSAKNYDKYLAQEANRFSNSISLEEKAEGKYLAVAVSSVIARDLFLENLENLGRELGYQLPSGAGTASDKVASQILQAYGMQGLNFCAKLHFKNTEKAKNA.

The RNase H type-2 domain occupies 78 to 290 (LPLIGTDEVG…FKNTEKAKNA (213 aa)). 3 residues coordinate a divalent metal cation: Asp-84, Glu-85, and Asp-187.

This sequence belongs to the RNase HII family. RnhC subfamily. It depends on Mn(2+) as a cofactor. The cofactor is Mg(2+).

It is found in the cytoplasm. It catalyses the reaction Endonucleolytic cleavage to 5'-phosphomonoester.. Functionally, endonuclease that specifically degrades the RNA of RNA-DNA hybrids. The polypeptide is Ribonuclease HIII (Streptococcus pneumoniae (strain P1031)).